Reading from the N-terminus, the 188-residue chain is MPHSSPGAPLDPVAFIHSQIRTVPDWPQPGVQFRDITTLLQSPKALRILVDLFVERYVDAKLDYVAGLDARGFIIAPIVAYELSVGFVPIRKVGKLPYKTRSESYDLEYGSATVEIHEDACKPGDRVIIMDDLIATGGTMMAGRNLLQRLGAEVVEGAAIIDLPDLGGSTLLRNAGLTVYTVTEFSGH.

The protein belongs to the purine/pyrimidine phosphoribosyltransferase family. As to quaternary structure, homodimer.

It localises to the cytoplasm. It catalyses the reaction AMP + diphosphate = 5-phospho-alpha-D-ribose 1-diphosphate + adenine. The protein operates within purine metabolism; AMP biosynthesis via salvage pathway; AMP from adenine: step 1/1. In terms of biological role, catalyzes a salvage reaction resulting in the formation of AMP, that is energically less costly than de novo synthesis. The polypeptide is Adenine phosphoribosyltransferase (Burkholderia cenocepacia (strain HI2424)).